Consider the following 187-residue polypeptide: COMM domain-containing protein 1 (187 aa).

One can recognise a COMM domain in the interval 112-186 (SLQKISWRID…SIQKHLQAKS (75 aa)).

This sequence belongs to the COMM domain-containing protein 1 family. In terms of assembly, component of the commander complex consisting of the CCC subcomplex and the retriever subcomplex.

In terms of biological role, scaffold protein in the commander complex that is essential for endosomal recycling of transmembrane cargos; the commander complex is composed of the CCC subcomplex and the retriever subcomplex. The sequence is that of COMM domain-containing protein 1 (commd1) from Dictyostelium discoideum (Social amoeba).